A 156-amino-acid chain; its full sequence is ATP synthase subunit b (156 aa).

Residues 7–27 form a helical membrane-spanning segment; sequence LFAQIIVFFGLVWFTMKFVWP.

It belongs to the ATPase B chain family. F-type ATPases have 2 components, F(1) - the catalytic core - and F(0) - the membrane proton channel. F(1) has five subunits: alpha(3), beta(3), gamma(1), delta(1), epsilon(1). F(0) has three main subunits: a(1), b(2) and c(10-14). The alpha and beta chains form an alternating ring which encloses part of the gamma chain. F(1) is attached to F(0) by a central stalk formed by the gamma and epsilon chains, while a peripheral stalk is formed by the delta and b chains.

It is found in the cell inner membrane. Functionally, f(1)F(0) ATP synthase produces ATP from ADP in the presence of a proton or sodium gradient. F-type ATPases consist of two structural domains, F(1) containing the extramembraneous catalytic core and F(0) containing the membrane proton channel, linked together by a central stalk and a peripheral stalk. During catalysis, ATP synthesis in the catalytic domain of F(1) is coupled via a rotary mechanism of the central stalk subunits to proton translocation. Its function is as follows. Component of the F(0) channel, it forms part of the peripheral stalk, linking F(1) to F(0). The sequence is that of ATP synthase subunit b from Neisseria gonorrhoeae (strain NCCP11945).